The following is a 520-amino-acid chain: Bifunctional dihydrofolate reductase-thymidylate synthase (520 aa).

The DHFR domain maps to 26–229 (AFSIVVALDM…LEFEICKYVP (204 aa)). Val30 lines the substrate pocket. Residues Ala32 and 38–44 (GIGDGES) each bind NADP(+). Position 52 (Asp52) interacts with substrate. NADP(+) contacts are provided by residues 81–83 (RKT), 102–105 (LSSK), and 157–164 (GGAQVYAD). 2 residues coordinate substrate: Tyr162 and Thr180. The tract at residues 234 to 520 (ERQYLELIDR…HPAIKMEMAV (287 aa)) is thymidylate synthase. DUMP is bound at residue Arg254. Residue Cys400 is part of the active site. DUMP-binding positions include His401, 421–425 (QRSCD), Asn433, and 463–465 (HVY).

This sequence in the N-terminal section; belongs to the dihydrofolate reductase family. It in the C-terminal section; belongs to the thymidylate synthase family.

It catalyses the reaction (6S)-5,6,7,8-tetrahydrofolate + NADP(+) = 7,8-dihydrofolate + NADPH + H(+). The enzyme catalyses dUMP + (6R)-5,10-methylene-5,6,7,8-tetrahydrofolate = 7,8-dihydrofolate + dTMP. It participates in cofactor biosynthesis; tetrahydrofolate biosynthesis; 5,6,7,8-tetrahydrofolate from 7,8-dihydrofolate: step 1/1. In terms of biological role, bifunctional enzyme. Involved in de novo dTMP biosynthesis. Key enzyme in folate metabolism. Catalyzes an essential reaction for de novo glycine and purine synthesis, DNA precursor synthesis, and for the conversion of dUMP to dTMP. The polypeptide is Bifunctional dihydrofolate reductase-thymidylate synthase (Leishmania major).